The sequence spans 176 residues: ATP-dependent protease subunit HslV (176 aa).

T2 is an active-site residue. Positions 157, 160, and 163 each coordinate Na(+).

This sequence belongs to the peptidase T1B family. HslV subfamily. As to quaternary structure, a double ring-shaped homohexamer of HslV is capped on each side by a ring-shaped HslU homohexamer. The assembly of the HslU/HslV complex is dependent on binding of ATP.

Its subcellular location is the cytoplasm. The enzyme catalyses ATP-dependent cleavage of peptide bonds with broad specificity.. Allosterically activated by HslU binding. Functionally, protease subunit of a proteasome-like degradation complex believed to be a general protein degrading machinery. The sequence is that of ATP-dependent protease subunit HslV from Salmonella agona (strain SL483).